The primary structure comprises 574 residues: NADH-ubiquinone oxidoreductase chain 5 (574 aa).

16 consecutive transmembrane segments (helical) span residues 10–30, 50–70, 87–107, 111–131, 141–161, 181–203, 211–231, 240–260, 280–300, 301–321, 340–360, 381–401, 423–443, 458–478, 489–509, and 554–574; these read VASKLMWVIFTGMLAPTLYMV, MMMTIILDPLGLMFSCTVVMI, FINRFTVLVLLFVLSMNMLIF, LIILLLGWDGLGIVSFILVIY, GMITALTNRIGDVMLLLAIAW, YQALVIIIAAMTKSAQMPFSSWL, TPVSALVHSSTLVTAGVFLLI, VWWFTTFLLFVAVSTTLMAGL, LGMMMAAMGLGMAHMAFFHMV, THAMFKALLFVCAGSFIHSHM, TSCLIMANLALCGFPFMSGFY, LILFAVGLTAFYSTRFTMCVV, MLLLASMSVISGSALTWILPL, TLMLVTLGALMSWFFLTTTNM, IINYFSCTMWFLVPLSSQFMM, and TPMNYLMMSSMLLLVATLVAI.

It belongs to the complex I subunit 5 family.

Its subcellular location is the mitochondrion inner membrane. It catalyses the reaction a ubiquinone + NADH + 5 H(+)(in) = a ubiquinol + NAD(+) + 4 H(+)(out). Its function is as follows. Core subunit of the mitochondrial membrane respiratory chain NADH dehydrogenase (Complex I) that is believed to belong to the minimal assembly required for catalysis. Complex I functions in the transfer of electrons from NADH to the respiratory chain. The immediate electron acceptor for the enzyme is believed to be ubiquinone. The protein is NADH-ubiquinone oxidoreductase chain 5 (ND5) of Lumbricus terrestris (Common earthworm).